The following is a 771-amino-acid chain: Kojibiose phosphorylase (771 aa).

358–359 (WD) provides a ligand contact to substrate. E498 serves as the catalytic Proton donor. 611–612 (KQ) is a binding site for substrate.

It belongs to the glycosyl hydrolase 65 family.

It catalyses the reaction kojibiose + phosphate = beta-D-glucose 1-phosphate + D-glucose. Catalyzes the reversible phosphorolysis of kojibiose into beta-D-glucose 1-phosphate (Glc1P) and D-glucose. The polypeptide is Kojibiose phosphorylase (kojP) (Caldanaerobacter subterraneus subsp. tengcongensis (strain DSM 15242 / JCM 11007 / NBRC 100824 / MB4) (Thermoanaerobacter tengcongensis)).